We begin with the raw amino-acid sequence, 104 residues long: MSEVRKNDHRLMQVLLAPVISEKATLVAEKNEQVVFEVAPDATKQEVKAAVELLFKVEVNSVNVLVQKGKAKRFGRFMGKRKDVKKAYVCLKPGQEINFEAEAK.

The protein belongs to the universal ribosomal protein uL23 family. As to quaternary structure, part of the 50S ribosomal subunit. Contacts protein L29, and trigger factor when it is bound to the ribosome.

Its function is as follows. One of the early assembly proteins it binds 23S rRNA. One of the proteins that surrounds the polypeptide exit tunnel on the outside of the ribosome. Forms the main docking site for trigger factor binding to the ribosome. The chain is Large ribosomal subunit protein uL23 from Paraburkholderia phymatum (strain DSM 17167 / CIP 108236 / LMG 21445 / STM815) (Burkholderia phymatum).